We begin with the raw amino-acid sequence, 234 residues long: MTKLTKRMRNIREKVEVTKDYEINEAIALLKELATANFNESVDVAVNLGIDARKSDQNVRGATVLPHGTGRNVRVAVFTQGANAEAAKEAGADLVGMEDLAELVKKGEMNFDVVVASPDAMRVVGQLGTILGPRGLMPNPKVGTVTPNVAQAVKNAKAGQVRYRNDKNGIIHTTIGKVDFDGAQLKENLESLLVALKKAKPTSAKGVFLKKVSISTTMGAGVSLDQSTLETTTK.

Belongs to the universal ribosomal protein uL1 family. Part of the 50S ribosomal subunit.

Functionally, binds directly to 23S rRNA. The L1 stalk is quite mobile in the ribosome, and is involved in E site tRNA release. Its function is as follows. Protein L1 is also a translational repressor protein, it controls the translation of the L11 operon by binding to its mRNA. This chain is Large ribosomal subunit protein uL1, found in Aliivibrio salmonicida (strain LFI1238) (Vibrio salmonicida (strain LFI1238)).